The chain runs to 361 residues: Trans-enoyl reductase gkaC (361 aa).

The 343-residue stretch at 15-357 folds into the Enoyl reductase (ER) domain; the sequence is EDVGSFEISR…RREISGKKMV (343 aa). Residues 48 to 51, 172 to 175, 195 to 198, tyrosine 213, 260 to 261, and 351 to 352 contribute to the NADP(+) site; these read CDWK, SSAS, SPKN, FE, and IS.

Belongs to the zinc-containing alcohol dehydrogenase family. Monomer.

Its pathway is mycotoxin biosynthesis. In terms of biological role, trans-enoyl reductasee; part of the gene cluster that mediates the biosynthesis of GKK1032, fungal natural products containing a macrocyclic para-cyclophane connected to a decahydrofluorene ring system that show potent antitumor activities. Within the pathway, the PKS-NRPS gkaA, with the help of the trans-enoyl reductase gkaC, synthesize the polyketide-tyrosyl acyl thioester product which can be reductively off-loaded by the terminal reductase (R) domain in gkaA. The PKS module of gkaA acts in combination with the trans-acting enoyl reductase gkaC to produce a methylated polyketide attached to the ACP domain. In parallel, the adenylation (A) domain of the NRPS module activated L-tyrosine, which is then transferred to the ACP domain. The condensation (C) domain subsequently links this group to the polyketide chain, forming an enzyme-bound amide. The alpha/beta hydrolase gkaG is then required to catalyze the subsequent Knoevenagel condensation that affords the 3-pyrrolin-2-one ring, whereas the three proteins gkaB, gkadX and gkaZ then function synergistically to form the cyclophane. The protein is Trans-enoyl reductase gkaC of Penicillium citrinum.